Reading from the N-terminus, the 1182-residue chain is NACHT, LRR and PYD domains-containing protein 1a (1182 aa).

The segment at 1 to 23 (MEESQSKQESSTKVAQHEGQEDV) is disordered. The region spanning 133–442 (QLVIIEGAAG…EFFAAMSYIL (310 aa)) is the NACHT domain. 139-146 (GAAGIGKS) is a binding site for ATP. LRR repeat units follow at residues 634–655 (NLEE…SLCT), 691–711 (SLTE…KMLC), and 720–743 (NLSI…RTLE). The interval 780-806 (QQRQQSGDKHMEPLGTEDEFWGPTGPV) is disordered. The interval 799–932 (FWGPTGPVTT…HYAVLENPSF (134 aa)) is ZU5. An FIIND domain is found at 799–1082 (FWGPTGPVTT…LRPALPKIAT (284 aa)). The UPA stretch occupies residues 933-1082 (SPMGILLRMI…LRPALPKIAT (150 aa)). One can recognise a CARD domain in the interval 1092–1175 (HFMDQHREQL…HLVMDILEKL (84 aa)).

It belongs to the NLRP family. Interacts (via LRR repeats) with BCL2 and BCL2L1 (via the loop between motifs BH4 and BH3). Interacts with NOD2; this interaction is enhanced in the presence of muramyl dipeptide (MDP) and increases IL1B release. Interacts with EIF2AK2/PKR; this interaction requires EIF2AK2 activity, is accompanied by EIF2AK2 autophosphorylation and promotes inflammasome assembly in response to danger-associated signals. Interacts with MEFV; this interaction targets Nlrp1a to degradation by autophagy, hence preventing excessive IL1B- and IL18-mediated inflammation. Interacts with DPP9; leading to inhibit activation of the inflammasome. DPP9 acts via formation of a ternary complex, composed of a DPP9 homodimer, one full-length Nlrp1a protein, and one cleaved C-terminus of Nlrp1a (NACHT, LRR and PYD domains-containing protein 1a, C-terminus). Interacts with DPP8; leading to inhibit activation of the inflammasome, probably via formation of a ternary complex with DPP8. In terms of assembly, interacts with the C-terminal part of Nlrp1a (NACHT, LRR and PYD domains-containing protein 1a, C-terminus) in absence of pathogens and other damage-associated signals. As to quaternary structure, interacts with the N-terminal part of Nlrp1a (NACHT, LRR and PYD domains-containing protein 1a, N-terminus) in absence of pathogens and other damage-associated signals. Homomultimer; forms the Nlrp1a inflammasome polymeric complex, a filament composed of homopolymers of this form in response to pathogens and other damage-associated signals. Interacts (via CARD domain) with CASP1 (via CARD domain); leading to CASP1 activation. In terms of processing, autocatalytically cleaved. Autocatalytic cleavage in FIIND region occurs constitutively, prior to activation signals, and is required for inflammasome activity (IL1B release), possibly by facilitating CASP1 binding. Both N- and C-terminal parts remain associated non-covalently. Ubiquitinated in response to pathogen-associated signals, leading to its degradation by the proteasome and subsequent release of the cleaved C-terminal part of the protein (NACHT, LRR and PYD domains-containing protein 1a, C-terminus), which polymerizes and forms the Nlrp1a inflammasome. Highly expressed in hematopoietic stem cells and progenitor cells of both myeloid and lymphoid origin. The expression is highly strain-dependent. Not expressed in Balb/cJ animals, but widely expressed in C57BL/6J. Expressed in macrophages resistant to Bacillus anthracis lethal toxin, but not in toxin-sensitive macrophages, except in CAST/EiJ strain.

It is found in the cytoplasm. Its subcellular location is the cytosol. The protein resides in the nucleus. The protein localises to the inflammasome. With respect to regulation, nlrp1a inflammasome is activated by pathogens and other damage-associated signals: activation promotes ubiquitination and degradation of the N-terminal part, releasing the cleaved C-terminal part of the protein (NACHT, LRR and PYD domains-containing protein 1a, C-terminus), which polymerizes and forms the Nlrp1a inflammasome. Nlrp1a inflammasome is inhibited by DPP8 and DPP9, which sequester the C-terminal fragment of Nlrp1a (NACHT, LRR and PYD domains-containing protein 1a, C-terminus) in a ternary complex, thereby preventing Nlrp1a oligomerization and activation. Nlrp1a inflammasome is activated by Val-boroPro (Talabostat, PT-100), an inhibitor of dipeptidyl peptidases DPP8 and DPP9. Val-boroPro relieves inhibition of DPP8 and/or DPP9 by promoting disruption of the ternary complex, releasing its C-terminal part from autoinhibition. In terms of biological role, acts as the sensor component of the Nlrp1a inflammasome, which mediates inflammasome activation in response to various pathogen-associated signals, leading to subsequent pyroptosis. Inflammasomes are supramolecular complexes that assemble in the cytosol in response to pathogens and other damage-associated signals and play critical roles in innate immunity and inflammation. Acts as a recognition receptor (PRR): recognizes specific pathogens and other damage-associated signals, and mediates the formation of the inflammasome polymeric complex. In response to pathogen-associated signals, the N-terminal part of Nlrp1a is degraded by the proteasome, releasing the cleaved C-terminal part of the protein (NACHT, LRR and PYD domains-containing protein 1a, C-terminus), which polymerizes to initiate the formation of the inflammasome complex: the inflammasome recruits pro-caspase-1 (proCASP1) and promotes caspase-1 (CASP1) activation, which subsequently cleaves and activates inflammatory cytokines IL1B and IL18 and gasdermin-D (GSDMD), leading to pyroptosis. In the absence of GSDMD expression, the Nlrp1a inflammasome is able to recruit and activate CASP8, leading to activation of gasdermin-E (GSDME). Activation of Nlrp1a inflammasome is also required for HMGB1 secretion; the active cytokines and HMGB1 stimulate inflammatory responses. When activated in the bone marrow, induces the pyroptosis of hematopoietic stem cells and progenitor cells of both myeloid and lymphoid lineages, hence allowing the removal of damaged cells, and the release of IL1B, which induces granulopoiesis. Constitutes the precursor of the Nlrp1a inflammasome, which mediates autoproteolytic processing within the FIIND domain to generate the N-terminal and C-terminal parts, which are associated non-covalently in absence of pathogens and other damage-associated signals. Functionally, regulatory part that prevents formation of the Nlrp1a inflammasome: in absence of pathogens and other damage-associated signals, interacts with the C-terminal part of Nlrp1a (NACHT, LRR and PYD domains-containing protein 1a, C-terminus), preventing activation of the Nlrp1a inflammasome. In response to pathogen-associated signals, this part is ubiquitinated and degraded by the proteasome, releasing the cleaved C-terminal part of the protein, which polymerizes and forms the Nlrp1a inflammasome. Its function is as follows. Constitutes the active part of the Nlrp1a inflammasome. In absence of pathogens and other damage-associated signals, interacts with the N-terminal part of Nlrp1a (NACHT, LRR and PYD domains-containing protein 1a, N-terminus), preventing activation of the Nlrp1a inflammasome. In response to pathogen-associated signals, the N-terminal part of Nlrp1a is degraded by the proteasome, releasing this form, which polymerizes to form the Nlrp1a inflammasome complex: the Nlrp1a inflammasome complex then directly recruits pro-caspase-1 (proCASP1) and promotes caspase-1 (CASP1) activation, leading to gasdermin-D (GSDMD) cleavage and subsequent pyroptosis. The sequence is that of NACHT, LRR and PYD domains-containing protein 1a from Mus musculus (Mouse).